The following is a 248-amino-acid chain: Cytochrome c oxidase subunit 2 (248 aa).

The Mitochondrial intermembrane portion of the chain corresponds to methionine 1–asparagine 39. Residues valine 40 to tyrosine 56 form a helical membrane-spanning segment. The Mitochondrial matrix segment spans residues asparagine 57–alanine 87. The chain crosses the membrane as a helical span at residues valine 88–cysteine 104. Residues aspartate 105 to glutamine 248 lie on the Mitochondrial intermembrane side of the membrane. The Cu cation site is built by histidine 183, cysteine 218, glutamate 220, cysteine 222, histidine 226, and methionine 229. Glutamate 220 is a binding site for Mg(2+).

It belongs to the cytochrome c oxidase subunit 2 family. Component of the cytochrome c oxidase (complex IV, CIV), a multisubunit enzyme composed of a catalytic core of 3 subunits and several supernumerary subunits. The complex exists as a monomer or a dimer and forms supercomplexes (SCs) in the inner mitochondrial membrane with ubiquinol-cytochrome c oxidoreductase (cytochrome b-c1 complex, complex III, CIII). Cu cation is required as a cofactor.

The protein resides in the mitochondrion inner membrane. The enzyme catalyses 4 Fe(II)-[cytochrome c] + O2 + 8 H(+)(in) = 4 Fe(III)-[cytochrome c] + 2 H2O + 4 H(+)(out). Functionally, component of the cytochrome c oxidase, the last enzyme in the mitochondrial electron transport chain which drives oxidative phosphorylation. The respiratory chain contains 3 multisubunit complexes succinate dehydrogenase (complex II, CII), ubiquinol-cytochrome c oxidoreductase (cytochrome b-c1 complex, complex III, CIII) and cytochrome c oxidase (complex IV, CIV), that cooperate to transfer electrons derived from NADH and succinate to molecular oxygen, creating an electrochemical gradient over the inner membrane that drives transmembrane transport and the ATP synthase. Cytochrome c oxidase is the component of the respiratory chain that catalyzes the reduction of oxygen to water. Electrons originating from reduced cytochrome c in the intermembrane space (IMS) are transferred via the dinuclear copper A center (CU(A)) of subunit 2 and heme A of subunit 1 to the active site in subunit 1, a binuclear center (BNC) formed by heme A3 and copper B (CU(B)). The BNC reduces molecular oxygen to 2 water molecules using 4 electrons from cytochrome c in the IMS and 4 protons from the mitochondrial matrix. The sequence is that of Cytochrome c oxidase subunit 2 (COX2) from Brettanomyces naardenensis (Yeast).